The chain runs to 379 residues: Oxidized polyvinyl alcohol hydrolase (379 aa).

The N-terminal stretch at 1-23 is a signal peptide; the sequence is MNQSLGVLRLTRGVIALALASVA. Active-site charge relay system residues include Ser203 and Ser309.

The protein belongs to the peptidase S9A family. As to quaternary structure, monomer.

It catalyses the reaction nonane-4,6-dione + H2O = pentan-2-one + butanoate + H(+). Catalyzes the hydrolysis of 4,6-nonanedione, a beta-diketone compound. Also mediates hydrolysis of oxidized polyvinyl alcohol (PVA) in the second step in the degradation of polyvinyl alcohol. Not active toward the monoketone structure. This is Oxidized polyvinyl alcohol hydrolase (pvaB) from Pseudomonas sp.